Consider the following 143-residue polypeptide: 3-hydroxyacyl-[acyl-carrier-protein] dehydratase FabZ (143 aa).

Histidine 47 is a catalytic residue.

This sequence belongs to the thioester dehydratase family. FabZ subfamily.

The protein localises to the cytoplasm. The catalysed reaction is a (3R)-hydroxyacyl-[ACP] = a (2E)-enoyl-[ACP] + H2O. Its function is as follows. Involved in unsaturated fatty acids biosynthesis. Catalyzes the dehydration of short chain beta-hydroxyacyl-ACPs and long chain saturated and unsaturated beta-hydroxyacyl-ACPs. The polypeptide is 3-hydroxyacyl-[acyl-carrier-protein] dehydratase FabZ (Rickettsia canadensis (strain McKiel)).